Consider the following 219-residue polypeptide: Putative ankyrin repeat protein BB_0399 (219 aa).

3 ANK repeats span residues Tyr104 to Gln133, Thr137 to Phe166, and Asn170 to Asp199.

This Borreliella burgdorferi (strain ATCC 35210 / DSM 4680 / CIP 102532 / B31) (Borrelia burgdorferi) protein is Putative ankyrin repeat protein BB_0399.